The sequence spans 496 residues: Omega-crystallin (496 aa).

The protein belongs to the aldehyde dehydrogenase family. As to expression, lens.

In terms of biological role, omega-crystallins are structural components of squids and octopi eye lens. Contains relatively little if any DHAL activity. The sequence is that of Omega-crystallin from Enteroctopus dofleini (North Pacific giant octopus).